The primary structure comprises 358 residues: Protein ocs (358 aa).

It belongs to the lysopine/nopaline/octopine/opine/vitopine dehydrogenases family. Monomer.

It carries out the reaction D-octopine + NAD(+) + H2O = L-arginine + pyruvate + NADH + H(+). The enzyme catalyses D-lysopine + NADP(+) + H2O = L-lysine + pyruvate + NADPH + H(+). Reductive condensation of pyruvate and arginine, lysine, histidine, or octopine to form octopine, lysopine, histopine, or octopinic acid, respectively. NADPH is the preferred cofactor, but NADH can also be used. The protein is Protein ocs (ocs) of Agrobacterium tumefaciens (strain Ach5).